A 589-amino-acid chain; its full sequence is Serine/threonine-protein kinase shk2 (589 aa).

The PH domain occupies 23–125; it reads GIIRSGWVML…WMDLISSRAL (103 aa). Positions 129-142 constitute a CRIB domain; sequence VSSPMNPKHQVHVG. The Protein kinase domain occupies 309-566; the sequence is FNVKHKLGQG…AAELLTHSFL (258 aa). ATP is bound by residues 315-323 and lysine 343; that span reads LGQGASGSV. The Proton acceptor role is filled by aspartate 434.

The protein belongs to the protein kinase superfamily. STE Ser/Thr protein kinase family. STE20 subfamily.

The enzyme catalyses L-seryl-[protein] + ATP = O-phospho-L-seryl-[protein] + ADP + H(+). The catalysed reaction is L-threonyl-[protein] + ATP = O-phospho-L-threonyl-[protein] + ADP + H(+). Functionally, forms an activated complex with GTP-bound Ras-like cdc42. Participates in Ras-dependent morphological control and mating response pathways. This is Serine/threonine-protein kinase shk2 (shk2) from Schizosaccharomyces pombe (strain 972 / ATCC 24843) (Fission yeast).